The chain runs to 131 residues: Arsenate reductase (131 aa).

Catalysis depends on nucleophile residues Cys10, Cys82, and Cys89. 2 cysteine pairs are disulfide-bonded: Cys10–Cys82 and Cys82–Cys89.

Belongs to the low molecular weight phosphotyrosine protein phosphatase family. Thioredoxin-coupled ArsC subfamily.

The protein localises to the cytoplasm. The enzyme catalyses arsenate + [thioredoxin]-dithiol + H(+) = arsenite + [thioredoxin]-disulfide + H2O. Functionally, catalyzes the reduction of arsenate [As(V)] to arsenite [As(III)]. This Staphylococcus aureus (strain COL) protein is Arsenate reductase.